The sequence spans 863 residues: Valine--tRNA ligase (863 aa).

The 'HIGH' region signature appears at Pro43–His53. The short motif at Lys517–Ser521 is the 'KMSKS' region element. Lys520 contacts ATP.

Belongs to the class-I aminoacyl-tRNA synthetase family. ValS type 2 subfamily.

It localises to the cytoplasm. The enzyme catalyses tRNA(Val) + L-valine + ATP = L-valyl-tRNA(Val) + AMP + diphosphate. Its function is as follows. Catalyzes the attachment of valine to tRNA(Val). As ValRS can inadvertently accommodate and process structurally similar amino acids such as threonine, to avoid such errors, it has a 'posttransfer' editing activity that hydrolyzes mischarged Thr-tRNA(Val) in a tRNA-dependent manner. This chain is Valine--tRNA ligase, found in Archaeoglobus fulgidus (strain ATCC 49558 / DSM 4304 / JCM 9628 / NBRC 100126 / VC-16).